We begin with the raw amino-acid sequence, 126 residues long: Protein ApaG (126 aa).

Positions 2 to 126 constitute an ApaG domain; it reads SALDDSIRVE…FRLALPGLLH (125 aa).

This chain is Protein ApaG, found in Shewanella sp. (strain MR-4).